Here is a 179-residue protein sequence, read N- to C-terminus: Small ribosomal subunit protein uS5 (179 aa).

In terms of domain architecture, S5 DRBM spans 13 to 76 (LDERVVLINR…EAAKRNLIRV (64 aa)). A disordered region spans residues 160 to 179 (DMTPQELNARRMRRETTEAA).

Belongs to the universal ribosomal protein uS5 family. As to quaternary structure, part of the 30S ribosomal subunit. Contacts proteins S4 and S8.

Functionally, with S4 and S12 plays an important role in translational accuracy. Its function is as follows. Located at the back of the 30S subunit body where it stabilizes the conformation of the head with respect to the body. The polypeptide is Small ribosomal subunit protein uS5 (Chloroflexus aggregans (strain MD-66 / DSM 9485)).